A 186-amino-acid polypeptide reads, in one-letter code: uncharacterized protein (186 aa).

The disordered stretch occupies residues 156 to 186 (DTKELERTTQPPEHQKHHQEPREKRGMNKRD). The segment covering 173–186 (HQEPREKRGMNKRD) has biased composition (basic and acidic residues).

This is an uncharacterized protein from Bacillus subtilis (strain 168).